The primary structure comprises 266 residues: Interleukin-1 beta (266 aa).

The propeptide occupies 1–114; it reads MAAVPELSSE…DTWDEEYESD (114 aa).

The protein belongs to the IL-1 family. As to quaternary structure, monomer. In its precursor form, weakly interacts with full-length MEFV; the mature cytokine does not interact at all. Interacts with integrins ITGAV:ITGBV and ITGA5:ITGB1; integrin-binding is required for IL1B signaling. Interacts with cargo receptor TMED10; the interaction is direct and is required for the secretion of IL1B mature form. Interacts with HSP90AB1; the interaction facilitates cargo translocation into the ERGIC. Interacts with HSP90B1; the interaction facilitates cargo translocation into the ERGIC.

It is found in the cytoplasm. Its subcellular location is the cytosol. It localises to the secreted. The protein resides in the lysosome. The protein localises to the extracellular exosome. Functionally, potent pro-inflammatory cytokine. Initially discovered as the major endogenous pyrogen, induces prostaglandin synthesis, neutrophil influx and activation, T-cell activation and cytokine production, B-cell activation and antibody production, and fibroblast proliferation and collagen production. Promotes Th17 differentiation of T-cells. Synergizes with IL12/interleukin-12 to induce IFNG synthesis from T-helper 1 (Th1) cells. Plays a role in angiogenesis by inducing VEGF production synergistically with TNF and IL6. Involved in transduction of inflammation downstream of pyroptosis: its mature form is specifically released in the extracellular milieu by passing through the gasdermin-D (GSDMD) pore. This Cavia porcellus (Guinea pig) protein is Interleukin-1 beta (IL1B).